Consider the following 276-residue polypeptide: Exosome complex component RRP43 (276 aa).

A2 carries the N-acetylalanine modification.

Belongs to the RNase PH family. Component of the RNA exosome core complex (Exo-9), composed of EXOSC1, EXOSC2, EXOSC3, EXOSC4, EXOSC5, EXOSC6, EXOSC7, EXOSC8 and EXOSC9; within the complex interacts with EXOSC5 and EXOSC6. The catalytically inactive RNA exosome core complex (Exo-9) associates with the catalytic subunit EXOSC10/RRP6. Exo-9 may associate with DIS3 to form the nucleolar exosome complex, or DIS3L to form the cytoplasmic exosome complex. Exo-9 is formed by a hexameric base ring consisting of the heterodimers EXOSC4-EXOSC9, EXOSC5-EXOSC8 and EXOSC6-EXOSC7, and a cap ring consisting of EXOSC1, EXOSC2 and EXOSC3. The RNA exosome complex associates with cofactors C1D/RRP47, MPHOSPH6/MPP6 and MTREX/MTR4. Binds outer membrane protein opap from Neisseria gonorrhoeae.

The protein resides in the cytoplasm. It is found in the nucleus. Its subcellular location is the nucleolus. Functionally, non-catalytic component of the RNA exosome complex which has 3'-&gt;5' exoribonuclease activity and participates in a multitude of cellular RNA processing and degradation events. In the nucleus, the RNA exosome complex is involved in proper maturation of stable RNA species such as rRNA, snRNA and snoRNA, in the elimination of RNA processing by-products and non-coding 'pervasive' transcripts, such as antisense RNA species and promoter-upstream transcripts (PROMPTs), and of mRNAs with processing defects, thereby limiting or excluding their export to the cytoplasm. The RNA exosome may be involved in Ig class switch recombination (CSR) and/or Ig variable region somatic hypermutation (SHM) by targeting AICDA deamination activity to transcribed dsDNA substrates. In the cytoplasm, the RNA exosome complex is involved in general mRNA turnover and specifically degrades inherently unstable mRNAs containing AU-rich elements (AREs) within their 3' untranslated regions, and in RNA surveillance pathways, preventing translation of aberrant mRNAs. It seems to be involved in degradation of histone mRNA. The catalytic inactive RNA exosome core complex of 9 subunits (Exo-9) is proposed to play a pivotal role in the binding and presentation of RNA for ribonucleolysis, and to serve as a scaffold for the association with catalytic subunits and accessory proteins or complexes. EXOSC8 binds to ARE-containing RNAs. This Homo sapiens (Human) protein is Exosome complex component RRP43 (EXOSC8).